A 205-amino-acid polypeptide reads, in one-letter code: Ypt/Rab-type GTPase avaA (205 aa).

GTP is bound by residues 17–23, 33–40, glycine 66, 125–128, and 157–159; these read SGVGKTS, FSGSYKAT, NKID, and SAK. Residues 37–45 carry the Effector region motif; sequence YKATIGADF. 2 S-geranylgeranyl cysteine lipidation sites follow: cysteine 203 and cysteine 205. A Cysteine methyl ester modification is found at cysteine 205.

This sequence belongs to the small GTPase superfamily. Rab family.

Rab activation is generally mediated by a guanine exchange factor (GEF), while inactivation through hydrolysis of bound GTP is catalyzed by a GTPase activating protein (GAP). Ypt/Rab-type GTPases are key regulators of membrane trafficking and intracellular vesicular transport. They act as molecular switches that convert between GTP-bound and GDP-bound states, and regulate virtually all steps of membrane traffic from the formation of the transport vesicle at the donor membrane to its fusion at the target membrane. In the GDP-bound state, Ypt proteins are predominantly cytosolic, solubilized through the interaction with a GDP dissociation inhibitor (GDI). In the GTP-bound state, the proteins are membrane bound and interact with specific effector proteins that select cargo, promote vesicle movement, or verify the correct site of fusion. AvaA functions in vacuolar biogenesis. This chain is Ypt/Rab-type GTPase avaA, found in Emericella nidulans (strain FGSC A4 / ATCC 38163 / CBS 112.46 / NRRL 194 / M139) (Aspergillus nidulans).